A 230-amino-acid chain; its full sequence is Ribose-5-phosphate isomerase A (230 aa).

Substrate-binding positions include threonine 29 to threonine 32, aspartate 85 to aspartate 88, and lysine 98 to glycine 101. Glutamate 107 serves as the catalytic Proton acceptor. Lysine 125 provides a ligand contact to substrate.

Belongs to the ribose 5-phosphate isomerase family. As to quaternary structure, homodimer.

The enzyme catalyses aldehydo-D-ribose 5-phosphate = D-ribulose 5-phosphate. It participates in carbohydrate degradation; pentose phosphate pathway; D-ribose 5-phosphate from D-ribulose 5-phosphate (non-oxidative stage): step 1/1. In terms of biological role, catalyzes the reversible conversion of ribose-5-phosphate to ribulose 5-phosphate. This Staphylococcus epidermidis (strain ATCC 35984 / DSM 28319 / BCRC 17069 / CCUG 31568 / BM 3577 / RP62A) protein is Ribose-5-phosphate isomerase A.